The primary structure comprises 99 residues: Class II hydrophobin 3 (99 aa).

The N-terminal stretch at 1 to 18 (MRIDILATAALLAQLASA) is a signal peptide. 3 cysteine pairs are disulfide-bonded: Cys31-Cys79, Cys40-Cys70, and Cys41-Cys53.

This sequence belongs to the cerato-ulmin hydrophobin family. As to quaternary structure, homodimer. Homodimers further self-assemble to form highly ordered films at water-air interfaces through intermolecular interactions.

Its subcellular location is the secreted. It localises to the cell wall. Aerial growth, conidiation, and dispersal of filamentous fungi in the environment rely upon a capability of their secreting small amphipathic proteins called hydrophobins (HPBs) with low sequence identity. Class I can self-assemble into an outermost layer of rodlet bundles on aerial cell surfaces, conferring cellular hydrophobicity that supports fungal growth, development and dispersal; whereas Class II form highly ordered films at water-air interfaces through intermolecular interactions but contribute nothing to the rodlet structure. Hyd3 is a class II hydrophobin required for barley root colonization. Hyd1 and Hyd3 are jointly required for conidial hydrophobicity and dispersal, but seem not to be involved in mycelia hydrophobicity. Inhibits conidial germination in environments not suitable for mycelial growth. Plays probably a role in intraspecific signaling or hyphal fusion. The polypeptide is Class II hydrophobin 3 (Bionectria ochroleuca (Gliocladium roseum)).